Here is a 408-residue protein sequence, read N- to C-terminus: Putative mannan endo-1,4-beta-mannosidase P (408 aa).

The signal sequence occupies residues methionine 1–alanine 23. Residue asparagine 73 is glycosylated (N-linked (GlcNAc...) asparagine). Positions 85 and 201 each coordinate substrate. The active-site Proton donor is glutamate 202. The active-site Nucleophile is the glutamate 322. Residue tryptophan 364 participates in substrate binding.

It belongs to the glycosyl hydrolase 5 (cellulase A) family.

It localises to the secreted. The enzyme catalyses Random hydrolysis of (1-&gt;4)-beta-D-mannosidic linkages in mannans, galactomannans and glucomannans.. This chain is Putative mannan endo-1,4-beta-mannosidase P (MANP), found in Arabidopsis thaliana (Mouse-ear cress).